The primary structure comprises 1313 residues: Target of rapamycin complex 1 subunit mip1 (1313 aa).

The tract at residues 1-35 is disordered; sequence MNDRISEVSGSSRARRSVLSYGTTETGSDRYTENS. S834, S837, and S882 each carry phosphoserine. 7 WD repeats span residues 986 to 1029, 1033 to 1074, 1087 to 1126, 1130 to 1170, 1176 to 1216, 1219 to 1259, and 1268 to 1308; these read TFNN…NSFK, SATT…KVEL, GDRN…CYAN, RSSN…RDSL, EHSS…SLQT, TDNS…NTFR, and PKPS…IHTD.

The protein belongs to the WD repeat RAPTOR family. The target of rapamycin complex 1 (TORC1) is composed of at least mip1, pop3/wat1, tco89, toc1 and tor2.

Its subcellular location is the cytoplasm. In terms of biological role, component of TORC1, which regulates multiple cellular processes to control cell growth in response to environmental signals. Tor2 is essential for growth. Nutrient limitation and environmental stress signals cause inactivation of TORC1. Active TORC1 positively controls cell growth and ribosome biogenesis by regulating ribosomal protein gene expression. TORC1 negatively controls G1 cell-cycle arrest, sexual development and amino acid uptake. Represses mating, meiosis and sporulation efficiency by interfering with the functions of the transcription factor ste11 and the meiosis-promoting RNA-binding protein mei2. In Schizosaccharomyces pombe (strain 972 / ATCC 24843) (Fission yeast), this protein is Target of rapamycin complex 1 subunit mip1.